A 397-amino-acid polypeptide reads, in one-letter code: Pentatricopeptide repeat-containing protein At1g80150, mitochondrial (397 aa).

The transit peptide at 1–81 (MLSLRHIRRF…FAFEDTVSRL (81 aa)) directs the protein to the mitochondrion. PPR repeat units lie at residues 105-139 (REGF…GCKR), 140-170 (SVKS…APSK), 176-210 (DAVS…GLTP), 211-245 (DVVT…GCKP), 246-280 (NLTT…QVEP), 281-315 (DSIT…GYKP), 316-350 (NLKI…KWYP), and 351-381 (NLDT…VHRR).

The protein belongs to the PPR family. P subfamily.

The protein resides in the mitochondrion. The polypeptide is Pentatricopeptide repeat-containing protein At1g80150, mitochondrial (Arabidopsis thaliana (Mouse-ear cress)).